A 741-amino-acid polypeptide reads, in one-letter code: Catalase-peroxidase 2 (741 aa).

Positions 1–27 are cleaved as a signal peptide; the sequence is MKINTLPTLSALTLAMSLALGAGMATA. The segment at residues 106-229 is a cross-link (tryptophyl-tyrosyl-methioninium (Trp-Tyr) (with M-255)); the sequence is WHSAGVYRIF…MGATQMGLIY (124 aa). The Proton acceptor role is filled by His107. The segment at residues 229–255 is a cross-link (tryptophyl-tyrosyl-methioninium (Tyr-Met) (with W-106)); sequence YVNPEGPNGVPDPLASAKEIRDTFGRM. Heme b is bound at residue His270.

This sequence belongs to the peroxidase family. Peroxidase/catalase subfamily. Homodimer or homotetramer. Requires heme b as cofactor. In terms of processing, formation of the three residue Trp-Tyr-Met cross-link is important for the catalase, but not the peroxidase activity of the enzyme.

The enzyme catalyses H2O2 + AH2 = A + 2 H2O. It carries out the reaction 2 H2O2 = O2 + 2 H2O. Functionally, bifunctional enzyme with both catalase and broad-spectrum peroxidase activity. This Shewanella oneidensis (strain ATCC 700550 / JCM 31522 / CIP 106686 / LMG 19005 / NCIMB 14063 / MR-1) protein is Catalase-peroxidase 2.